The sequence spans 284 residues: Succinate dehydrogenase [ubiquinone] iron-sulfur subunit, mitochondrial (284 aa).

A mitochondrion-targeting transit peptide spans M1–G26. Residues K44–M137 form the 2Fe-2S ferredoxin-type domain. C97, C102, C105, and C117 together coordinate [2Fe-2S] cluster. The region spanning D180–Y210 is the 4Fe-4S ferredoxin-type domain. C190, C193, and C196 together coordinate [4Fe-4S] cluster. C200 contributes to the [3Fe-4S] cluster binding site. W205 lines the a ubiquinone pocket. Positions 247 and 253 each coordinate [3Fe-4S] cluster. C257 lines the [4Fe-4S] cluster pocket.

This sequence belongs to the succinate dehydrogenase/fumarate reductase iron-sulfur protein family. Component of complex II composed of four subunits: the flavoprotein (FP) sdha, iron-sulfur protein (IP) sdhb, and a cytochrome b composed of sdhc and sdhd. It depends on [2Fe-2S] cluster as a cofactor. [3Fe-4S] cluster is required as a cofactor. [4Fe-4S] cluster serves as cofactor.

The protein localises to the mitochondrion inner membrane. It catalyses the reaction a quinone + succinate = fumarate + a quinol. It carries out the reaction (R)-malate + a quinone = enol-oxaloacetate + a quinol. The catalysed reaction is (S)-malate + a quinone = enol-oxaloacetate + a quinol. It participates in carbohydrate metabolism; tricarboxylic acid cycle; fumarate from succinate (eukaryal route): step 1/1. Enol-oxaloacetate inhibits the succinate dehydrogenase activity. Its function is as follows. Iron-sulfur protein (IP) subunit of the succinate dehydrogenase complex (mitochondrial respiratory chain complex II), responsible for transferring electrons from succinate to ubiquinone (coenzyme Q). SDH also oxidizes malate to the non-canonical enol form of oxaloacetate, enol-oxaloacetate. Enol-oxaloacetate, which is a potent inhibitor of the succinate dehydrogenase activity, is further isomerized into keto-oxaloacetate. The protein is Succinate dehydrogenase [ubiquinone] iron-sulfur subunit, mitochondrial (sdhb) of Xenopus tropicalis (Western clawed frog).